We begin with the raw amino-acid sequence, 262 residues long: Glutamate racemase (262 aa).

Residues 5 to 6 (DS) and 37 to 38 (YG) each bind substrate. The active-site Proton donor/acceptor is the Cys69. 70-71 (NT) provides a ligand contact to substrate. Cys181 acts as the Proton donor/acceptor in catalysis. 182-183 (TH) provides a ligand contact to substrate.

This sequence belongs to the aspartate/glutamate racemases family.

It catalyses the reaction L-glutamate = D-glutamate. Its pathway is cell wall biogenesis; peptidoglycan biosynthesis. In terms of biological role, provides the (R)-glutamate required for cell wall biosynthesis. The protein is Glutamate racemase of Buchnera aphidicola subsp. Acyrthosiphon pisum (strain APS) (Acyrthosiphon pisum symbiotic bacterium).